The sequence spans 134 residues: Large ribosomal subunit protein uL14 (134 aa).

Belongs to the universal ribosomal protein uL14 family. In terms of assembly, part of the 50S ribosomal subunit. Forms a cluster with proteins L3 and L19. In the 70S ribosome, L14 and L19 interact and together make contacts with the 16S rRNA in bridges B5 and B8.

Its function is as follows. Binds to 23S rRNA. Forms part of two intersubunit bridges in the 70S ribosome. The sequence is that of Large ribosomal subunit protein uL14 from Deinococcus geothermalis (strain DSM 11300 / CIP 105573 / AG-3a).